A 543-amino-acid chain; its full sequence is Putative pectinesterase/pectinesterase inhibitor 22 (543 aa).

Residues methionine 1–serine 19 form the signal peptide. The segment at alanine 38–methionine 197 is pectinesterase inhibitor 22. N-linked (GlcNAc...) asparagine glycans are attached at residues asparagine 211 and asparagine 263. The tract at residues asparagine 240–arginine 527 is pectinesterase 22. Substrate-binding residues include threonine 315 and glutamine 345. Aspartate 368 functions as the Proton donor; for pectinesterase activity in the catalytic mechanism. A disulfide bridge connects residues cysteine 382 and cysteine 402. The Nucleophile; for pectinesterase activity role is filled by aspartate 389. Substrate contacts are provided by arginine 448 and tryptophan 450.

In the N-terminal section; belongs to the PMEI family. The protein in the C-terminal section; belongs to the pectinesterase family.

The protein localises to the secreted. It localises to the cell wall. It catalyses the reaction [(1-&gt;4)-alpha-D-galacturonosyl methyl ester](n) + n H2O = [(1-&gt;4)-alpha-D-galacturonosyl](n) + n methanol + n H(+). The protein operates within glycan metabolism; pectin degradation; 2-dehydro-3-deoxy-D-gluconate from pectin: step 1/5. Its function is as follows. Acts in the modification of cell walls via demethylesterification of cell wall pectin. The protein is Putative pectinesterase/pectinesterase inhibitor 22 (PME22) of Arabidopsis thaliana (Mouse-ear cress).